Consider the following 98-residue polypeptide: Large ribosomal subunit protein bL28 (98 aa).

Belongs to the bacterial ribosomal protein bL28 family.

The polypeptide is Large ribosomal subunit protein bL28 (Beijerinckia indica subsp. indica (strain ATCC 9039 / DSM 1715 / NCIMB 8712)).